Reading from the N-terminus, the 885-residue chain is MTTLSPEAFAGHTPMMQQYLRIKADHPDTLVFYRMGDFYELFFEDAEKAARLLDLTLTQRGASAGTPIKMAGVPHHAVEQYLAKLVKMGESVAICEQIGDPATSKGPVERKVVRVVTPGTLTDAALLSDKNDVYLLAMCTGHNKRGVAVNIGLAWLNLASGALRLAEIEPDQLGAALERIRPAEILTADGATDTVPAGAGAIKRVPAWHFDIASGTQRLCDQLDVAGLDGFGAHSLTSACGAAGALLLYAAATQGQQLRHVRSLKVENETEYIGLDPATRRNLELTETLRGTESPTLYSLLDTCCTTMGSRLLRHWLHHPPRASVAAQSRQQAIGALLDAPADASLDALRSALRQIADVERITGRLALLSARPRDLSSLRDTFAALPALRERISAIVANADALTRVDAALAPPAECLDLLTSAIAPEPAAMVRDGGVIARGYDAELDELRDISENCGQFLIDLEARERTRTGIANLRVEYNKVHGFYIEVTRGQTDKVPDDYRRRQTLKNAERYITPELKTFEDKALSAQERALARERALYDGVLQALLPFIPECQRVASALAELDVLAAFAERARTLDWVAPTFTDEIGIEIEQGRHPVVEAQVEQFIANDCRFGAERKLLLITGPNMGGKSTFMRQTALIALMAYVGSYVPAKSACFGPIDRIFTRIGAADDLAGGRSTFMVEMTEAAAILNDATPQSLVLMDEIGRGTSTFDGLALAWAIARHLLAQNGCYTLFATHYFELTQLPAEFPQAANVHLSAVEHGHGIVFLHAVNEGPANQSYGLQVAQLAGVPAPVIRAARKHLAYLEQQSATQNTPQLDLFSAPPAAADELECADAPAVSAIPHPALEKLRDIDPDDLKPRDALDLLYELRTLVRSHDADGHA.

Residue Gly-626–Ser-633 participates in ATP binding.

The protein belongs to the DNA mismatch repair MutS family.

This protein is involved in the repair of mismatches in DNA. It is possible that it carries out the mismatch recognition step. This protein has a weak ATPase activity. The sequence is that of DNA mismatch repair protein MutS from Burkholderia ambifaria (strain MC40-6).